Here is a 117-residue protein sequence, read N- to C-terminus: Ig lambda-1 chain V region (117 aa).

Positions 1 to 20 (MAWISLILSLLALSSGGAIS) are cleaved as a signal peptide. The residue at position 21 (Q21) is a Pyrrolidone carboxylic acid. Positions 21–117 (QAVVTQESAL…YFCALWYSNH (97 aa)) constitute an Ig-like domain.

This Mus musculus (Mouse) protein is Ig lambda-1 chain V region.